Here is a 510-residue protein sequence, read N- to C-terminus: D-allose import ATP-binding protein AlsA (510 aa).

ABC transporter domains are found at residues isoleucine 6–glutamate 245 and leucine 260–glutamine 509. Glycine 38–serine 45 is an ATP binding site.

This sequence belongs to the ABC transporter superfamily. D-allose importer (TC 3.A.1.2.6) family. The complex is composed of two ATP-binding proteins (AlsA), two transmembrane proteins (AlsC) and a solute-binding protein (AlsB).

The protein localises to the cell inner membrane. It catalyses the reaction D-allose(out) + ATP + H2O = D-allose(in) + ADP + phosphate + H(+). Its function is as follows. Part of the ABC transporter complex AlsBAC involved in D-allose import. Probably responsible for energy coupling to the transport system. The polypeptide is D-allose import ATP-binding protein AlsA (alsA) (Escherichia coli (strain K12)).